A 266-amino-acid polypeptide reads, in one-letter code: Undecaprenyl-diphosphatase (266 aa).

8 helical membrane passes run 1–21, 39–59, 83–103, 111–131, 144–164, 183–203, 218–238, and 246–266; these read MDTFQVIILALIQGLTEFLPI, QGLAFDVAVHIGSLLAVVLYF, SKLAWWIILATLPAVILGFAL, LRGPGVIAITTVLFGLLLWWA, TGWKKALLIGFAQALALIPGT, AAARFSFLMSIPVILGAAILM, SLALGVGVSFVAAYTCIHLFL, and MTPFVIYRLALGALLCAFIFM.

The protein belongs to the UppP family.

Its subcellular location is the cell inner membrane. The enzyme catalyses di-trans,octa-cis-undecaprenyl diphosphate + H2O = di-trans,octa-cis-undecaprenyl phosphate + phosphate + H(+). Its function is as follows. Catalyzes the dephosphorylation of undecaprenyl diphosphate (UPP). Confers resistance to bacitracin. This Shewanella woodyi (strain ATCC 51908 / MS32) protein is Undecaprenyl-diphosphatase.